A 623-amino-acid chain; its full sequence is Glutathione import ATP-binding protein GsiA (623 aa).

ABC transporter domains lie at V15–L269 and L325–M564. ATP is bound by residues G49 to S56 and G357 to S364.

Belongs to the ABC transporter superfamily. Glutathione importer (TC 3.A.1.5.11) family. In terms of assembly, the complex is composed of two ATP-binding proteins (GsiA), two transmembrane proteins (GsiC and GsiD) and a solute-binding protein (GsiB).

The protein resides in the cell inner membrane. It catalyses the reaction glutathione(out) + ATP + H2O = glutathione(in) + ADP + phosphate + H(+). Functionally, part of the ABC transporter complex GsiABCD involved in glutathione import. Responsible for energy coupling to the transport system. The protein is Glutathione import ATP-binding protein GsiA of Salmonella typhimurium (strain LT2 / SGSC1412 / ATCC 700720).